We begin with the raw amino-acid sequence, 275 residues long: Large ribosomal subunit protein uL2cz/uL2cy (275 aa).

Disordered stretches follow at residues 1-26 (MAIH…VKSN) and 224-275 (MNPV…RRTK). The span at 7–26 (KTSTPSTRNGTVDSRQVKSN) shows a compositional bias: polar residues.

It belongs to the universal ribosomal protein uL2 family. Part of the 50S ribosomal subunit.

It is found in the plastid. It localises to the chloroplast. This chain is Large ribosomal subunit protein uL2cz/uL2cy (rpl2-A), found in Phaseolus angularis (Azuki bean).